Here is a 119-residue protein sequence, read N- to C-terminus: Small ribosomal subunit protein uS13 (119 aa).

Residues 96–119 (PVRGQRTKTNARTRKGPRKLIKSR) form a disordered region.

This sequence belongs to the universal ribosomal protein uS13 family. As to quaternary structure, part of the 30S ribosomal subunit. Forms a loose heterodimer with protein S19. Forms two bridges to the 50S subunit in the 70S ribosome.

Its function is as follows. Located at the top of the head of the 30S subunit, it contacts several helices of the 16S rRNA. In the 70S ribosome it contacts the 23S rRNA (bridge B1a) and protein L5 of the 50S subunit (bridge B1b), connecting the 2 subunits; these bridges are implicated in subunit movement. Contacts the tRNAs in the A and P-sites. In Buchnera aphidicola subsp. Cinara cedri (strain Cc), this protein is Small ribosomal subunit protein uS13.